The primary structure comprises 353 residues: Ion-translocating oxidoreductase complex subunit D (353 aa).

4 consecutive transmembrane segments (helical) span residues 20–40, 44–64, 77–108, and 123–143; these read IMLLVLIATLPGIAAQWYYFG, IIQVLIASVAALVAEAAILHL, SALLTALLLGVSIPSLAPWWMVTIGTVFAIII, and PAMVGYVVLVISFPVQMTSWL. Thr-187 is subject to FMN phosphoryl threonine. The next 4 helical transmembrane spans lie at 214–234, 242–262, 267–287, and 301–318; these read VIAGIGWQWVNVGFLLGGVFL, WHIPVSFIASLAFFATLGWLL, LVTPMIHLFSGATMLGAFFIA, and LLYGVLIGLLTWLIRSYG.

This sequence belongs to the NqrB/RnfD family. As to quaternary structure, the complex is composed of six subunits: RnfA, RnfB, RnfC, RnfD, RnfE and RnfG. It depends on FMN as a cofactor.

It is found in the cell inner membrane. Part of a membrane-bound complex that couples electron transfer with translocation of ions across the membrane. The polypeptide is Ion-translocating oxidoreductase complex subunit D (Erwinia tasmaniensis (strain DSM 17950 / CFBP 7177 / CIP 109463 / NCPPB 4357 / Et1/99)).